The chain runs to 499 residues: Probable cytosol aminopeptidase (499 aa).

The Mn(2+) site is built by Lys-263 and Asp-268. Residue Lys-275 is part of the active site. Mn(2+) contacts are provided by Asp-286, Asp-345, and Glu-347. Arg-349 is a catalytic residue.

The protein belongs to the peptidase M17 family. It depends on Mn(2+) as a cofactor.

Its subcellular location is the cytoplasm. It catalyses the reaction Release of an N-terminal amino acid, Xaa-|-Yaa-, in which Xaa is preferably Leu, but may be other amino acids including Pro although not Arg or Lys, and Yaa may be Pro. Amino acid amides and methyl esters are also readily hydrolyzed, but rates on arylamides are exceedingly low.. The enzyme catalyses Release of an N-terminal amino acid, preferentially leucine, but not glutamic or aspartic acids.. Its function is as follows. Presumably involved in the processing and regular turnover of intracellular proteins. Catalyzes the removal of unsubstituted N-terminal amino acids from various peptides. The protein is Probable cytosol aminopeptidase of Chlamydia trachomatis serovar A (strain ATCC VR-571B / DSM 19440 / HAR-13).